A 229-amino-acid chain; its full sequence is Large ribosomal subunit protein uL1 (229 aa).

In terms of assembly, part of the 50S ribosomal subunit.

Functionally, directly binds to 23S rRNA. Forms what is known as the L1 stalk, which protrudes beyond the 70S ribosome surface. The stalk is preferentially stabilized in 70S versus 50S crystals. Interacts with the E site tRNA, blocking the exit path. This blockage implies that this section of the ribosome must be able to move to release the deacetylated tRNA. In terms of biological role, protein L1 is also a translational repressor protein, it controls the translation of the L11 operon by binding to its mRNA. The chain is Large ribosomal subunit protein uL1 (rplA) from Thermus thermophilus (strain ATCC 27634 / DSM 579 / HB8).